The sequence spans 86 residues: Gas vesicle protein M (86 aa).

Belongs to the gas vesicle GvpA family. GvpF to GvpM interact with each other in vitro, and may form multi-subunit complex(es). Might interact with GvpA.

The protein localises to the gas vesicle. In terms of biological role, proteins GvpF to GvpM might be involved in nucleating gas vesicle formation. A minor component of the gas vesicle. Gas vesicles are small, hollow, gas filled protein structures found in some microorganisms. They allow positioning of halobacteria at the optimal depth for growth in the poorly aerated, shallow brine pools of their habitat. Expression of a 9.5 kb mc-vac DNA fragment containing 2 divergently transcribed regions (gvpD-gvpE-gvpF-gvpG-gvpH-gvpI-gvpJ-gvpK-gvpL-gvpM and gvpA-gvpC-gvpN-gvpO) allows H.volcanii to produce gas vesicles. This chain is Gas vesicle protein M, found in Haloferax mediterranei (strain ATCC 33500 / DSM 1411 / JCM 8866 / NBRC 14739 / NCIMB 2177 / R-4) (Halobacterium mediterranei).